The chain runs to 72 residues: Heat-stable enterotoxin C (72 aa).

The signal sequence occupies residues 1-19 (MKKIVFVLTLMLFSFGTLG). Intrachain disulfides connect Cys60–Cys65, Cys61–Cys69, and Cys64–Cys72.

This sequence belongs to the heat-stable enterotoxin family.

The protein localises to the secreted. Toxin which activates the particulate form of guanylate cyclase and increases cyclic GMP levels within the host intestinal epithelial cells. Highly toxic. This Yersinia enterocolitica protein is Heat-stable enterotoxin C (ystC).